We begin with the raw amino-acid sequence, 833 residues long: Phosphatidylinositol-3-phosphatase myotubularin-2 (833 aa).

The 68-residue stretch at 42-109 folds into the GRAM domain; that stretch reads GSYSNLDCLL…VAIEKFNKLA (68 aa). One can recognise a Myotubularin phosphatase domain in the interval 181 to 647; it reads TNPKERLLNE…LAPTLWPQFH (467 aa). Residues 329-332, 354-355, 440-446, and R486 each bind substrate; these read NGAK, NI, and CSDGWDR. The active-site Phosphocysteine intermediate is C440. The interval 503–530 is disordered; sequence QSSSARSFPSSPVRQSPGSAAAQSSSSS. Residues 504 to 530 show a composition bias toward low complexity; sequence SSSARSFPSSPVRQSPGSAAAQSSSSS. A coiled-coil region spans residues 660-717; the sequence is ETEDQCRAMTVKYSEMKKEKEEAERKVDELSSAMESLNEELLNERDISRAARESAKRA. The tract at residues 753-772 is disordered; that stretch reads KCSHSIPQKQSEDNTTDVSE.

It belongs to the protein-tyrosine phosphatase family. Non-receptor class myotubularin subfamily. In terms of tissue distribution, mostly expressed in flowers and roots, and, to a lower extent, in siliques and leaves.

It is found in the cytoplasm. It carries out the reaction a 1,2-diacyl-sn-glycero-3-phospho-(1D-myo-inositol-3-phosphate) + H2O = a 1,2-diacyl-sn-glycero-3-phospho-(1D-myo-inositol) + phosphate. The enzyme catalyses a 1,2-diacyl-sn-glycero-3-phospho-(1D-myo-inositol-3,5-bisphosphate) + H2O = a 1,2-diacyl-sn-glycero-3-phospho-(1D-myo-inositol-5-phosphate) + phosphate. Its function is as follows. Phosphatase with phosphoinositide 3'-phosphatase activity that can use phosphatidylinositol-3-phosphate (PtdIns3P) and phosphatidylinositol-3,5-diphosphate (PtdIns3,5P(2)) as substrates and produces phosphatidylinositol-5-phosphate (PtdIns5P); participates in pathway(s) that transfer gene regulatory signals to the nucleus. The protein is Phosphatidylinositol-3-phosphatase myotubularin-2 (MTM2) of Arabidopsis thaliana (Mouse-ear cress).